The primary structure comprises 644 residues: 3D-(3,5/4)-trihydroxycyclohexane-1,2-dione hydrolase (644 aa).

Glu-65 lines the thiamine diphosphate pocket. The interval 442-522 is thiamine pyrophosphate binding; that stretch reads SLPGDLQRMW…INVLLFDNSG (81 aa). Positions 493 and 520 each coordinate Mg(2+).

The protein belongs to the TPP enzyme family. The cofactor is Mg(2+). Requires thiamine diphosphate as cofactor.

The enzyme catalyses 3D-3,5/4-trihydroxycyclohexane-1,2-dione + H2O = 5-deoxy-D-glucuronate + H(+). It participates in polyol metabolism; myo-inositol degradation into acetyl-CoA; acetyl-CoA from myo-inositol: step 3/7. Its function is as follows. Involved in the cleavage of the C1-C2 bond of 3D-(3,5/4)-trihydroxycyclohexane-1,2-dione (THcHDO) to yield 5-deoxy-glucuronate (5DG). This is 3D-(3,5/4)-trihydroxycyclohexane-1,2-dione hydrolase from Bacillus cereus (strain AH820).